Here is a 242-residue protein sequence, read N- to C-terminus: Ribose-5-phosphate isomerase A (242 aa).

Substrate is bound by residues 39-42 (SGST), 95-98 (DGAD), and 108-111 (KGGG). Glutamate 117 functions as the Proton acceptor in the catalytic mechanism. Position 135 (lysine 135) interacts with substrate.

This sequence belongs to the ribose 5-phosphate isomerase family. As to quaternary structure, homodimer.

It catalyses the reaction aldehydo-D-ribose 5-phosphate = D-ribulose 5-phosphate. It participates in carbohydrate degradation; pentose phosphate pathway; D-ribose 5-phosphate from D-ribulose 5-phosphate (non-oxidative stage): step 1/1. Catalyzes the reversible conversion of ribose-5-phosphate to ribulose 5-phosphate. The protein is Ribose-5-phosphate isomerase A of Chlamydia trachomatis serovar A (strain ATCC VR-571B / DSM 19440 / HAR-13).